Here is a 322-residue protein sequence, read N- to C-terminus: Uridylate-specific endoribonuclease EndoU (322 aa).

Residues 25 to 45 form a helical membrane-spanning segment; that stretch reads FVIVGLLITIGILSWHFYEYF. Residues 53 to 322 enclose the EndoU domain; sequence TPDDVLTLSK…LIGTVYPDSS (270 aa). Residues H200, H215, and K259 contribute to the active site.

It belongs to the ENDOU family. As to quaternary structure, monomer. Requires Mn(2+) as cofactor. In terms of tissue distribution, predominantly expressed in head.

Its subcellular location is the membrane. It catalyses the reaction a ribonucleotidyl-ribonucleotide-RNA = a 3'-end 2',3'-cyclophospho-ribonucleotide-RNA + a 5'-end dephospho-ribonucleoside-RNA. In terms of biological role, endoribonuclease that cleaves single-stranded RNAs at uridylates and releases products that have 2'-3'-cyclic phosphate termini. Preferentially cleaves single stranded RNA at poly-U sites with CU, UC and AU sites cleaved less efficiently. May target mRNAs encoding proteins involved in lipid metabolism to regulate their expression. Regulates levels of TBPH protein, but not mRNA, by an as yet unknown mechanism. Important for neuronal development or function. This Drosophila melanogaster (Fruit fly) protein is Uridylate-specific endoribonuclease EndoU.